The following is a 325-amino-acid chain: Cytochrome c1, heme protein, mitochondrial (325 aa).

The N-terminal 84 residues, 1 to 84, are a transit peptide targeting the mitochondrion; the sequence is MAAAAASLRR…AVALHSAVSA (84 aa). The Mitochondrial intermembrane portion of the chain corresponds to 85–287; sequence SDLELHPPSY…SEPEHDHRKR (203 aa). The 102-residue stretch at 108–209 folds into the Cytochrome c domain; sequence TSIRRGFQVY…IVRARHGGED (102 aa). Heme c contacts are provided by Cys-121, Cys-124, His-125, and Met-244. A helical membrane pass occupies residues 288 to 308; that stretch reads MGLKMLLMMGLLLPLTYAMKR. At 309–325 the chain is on the mitochondrial matrix side; sequence HKWSVLKSRKLAYRPPK.

The protein belongs to the cytochrome c family. In terms of assembly, component of the ubiquinol-cytochrome c oxidoreductase (cytochrome b-c1 complex, complex III, CIII), a multisubunit enzyme composed of 11 subunits. The complex is composed of 3 respiratory subunits cytochrome b, cytochrome c1 and Rieske protein UQCRFS1, 2 core protein subunits UQCRC1/QCR1 and UQCRC2/QCR2, and 6 low-molecular weight protein subunits UQCRH/QCR6, UQCRB/QCR7, UQCRQ/QCR8, UQCR10/QCR9, UQCR11/QCR10 and subunit 9, the cleavage product of Rieske protein UQCRFS1. The complex exists as an obligatory dimer and forms supercomplexes (SCs) in the inner mitochondrial membrane with NADH-ubiquinone oxidoreductase (complex I, CI) and cytochrome c oxidase (complex IV, CIV), resulting in different assemblies (supercomplex SCI(1)III(2)IV(1) and megacomplex MCI(2)III(2)IV(2)). Interacts with FLVCR2; this interaction occurs in the absence of heme and is disrupted upon heme binding. Heme c is required as a cofactor.

It is found in the mitochondrion inner membrane. It catalyses the reaction a quinol + 2 Fe(III)-[cytochrome c](out) = a quinone + 2 Fe(II)-[cytochrome c](out) + 2 H(+)(out). Functionally, component of the ubiquinol-cytochrome c oxidoreductase, a multisubunit transmembrane complex that is part of the mitochondrial electron transport chain which drives oxidative phosphorylation. The respiratory chain contains 3 multisubunit complexes succinate dehydrogenase (complex II, CII), ubiquinol-cytochrome c oxidoreductase (cytochrome b-c1 complex, complex III, CIII) and cytochrome c oxidase (complex IV, CIV), that cooperate to transfer electrons derived from NADH and succinate to molecular oxygen, creating an electrochemical gradient over the inner membrane that drives transmembrane transport and the ATP synthase. The cytochrome b-c1 complex catalyzes electron transfer from ubiquinol to cytochrome c, linking this redox reaction to translocation of protons across the mitochondrial inner membrane, with protons being carried across the membrane as hydrogens on the quinol. In the process called Q cycle, 2 protons are consumed from the matrix, 4 protons are released into the intermembrane space and 2 electrons are passed to cytochrome c. Cytochrome c1 is a catalytic core subunit containing a c-type heme. It transfers electrons from the [2Fe-2S] iron-sulfur cluster of the Rieske protein to cytochrome c. The protein is Cytochrome c1, heme protein, mitochondrial (Cyc1) of Mus musculus (Mouse).